We begin with the raw amino-acid sequence, 274 residues long: Large ribosomal subunit protein uL2 (274 aa).

Residues 214–274 (LGRRPRTRPV…NKYIVERRKK (61 aa)) form a disordered region.

The protein belongs to the universal ribosomal protein uL2 family. As to quaternary structure, part of the 50S ribosomal subunit. Forms a bridge to the 30S subunit in the 70S ribosome.

In terms of biological role, one of the primary rRNA binding proteins. Required for association of the 30S and 50S subunits to form the 70S ribosome, for tRNA binding and peptide bond formation. It has been suggested to have peptidyltransferase activity; this is somewhat controversial. Makes several contacts with the 16S rRNA in the 70S ribosome. This chain is Large ribosomal subunit protein uL2, found in Flavobacterium johnsoniae (strain ATCC 17061 / DSM 2064 / JCM 8514 / BCRC 14874 / CCUG 350202 / NBRC 14942 / NCIMB 11054 / UW101) (Cytophaga johnsonae).